The following is a 273-amino-acid chain: Short-chain dehydrogenase fogB (273 aa).

NADP(+) is bound by residues Ile-16, Asp-66, Arg-128, Tyr-174, Lys-178, Val-207, and Thr-209. The active-site Proton donor is the Tyr-174. The active-site Lowers pKa of active site Tyr is Lys-178.

It belongs to the short-chain dehydrogenases/reductases (SDR) family.

Short-chain dehydrogenase; part of the gene cluster that mediates the biosynthesis of flavoglaucin and congeners (including aspergin, dihydroauroglaucin and auroglaucin), prenylated salicylaldehyde derivatives carrying a saturated or an unsaturated C-7 side chain. The PKS fogA releases the carboxylic acid (8E,10E,12E)-3,5,7-trihydroxytetradeca-8,10,12-trienoic acid as its product, as well as derivatives with one and two double bonds. FogA is indeed able to reduce the initial triketide, thus being at least partially responsible for the differently saturated heptyl side chains of flavoglaucin congeners. The oxidoreductases fogB, fogC and fogD modify the nascent polyketide in fogA-bound form and, together, fogA, fogB, fogC and fogD are necessary for the formation of the aromatic core and the cyclized PKS products are released as salicyl alcohols. In particular, fogB is responsible for oxidation of a hydroxyl group or reduction of remaining double bond(s) at the C-7 residue whereas fogD is probably involved in the reductive release of the modified PKS products. The cytochrome P450 monooxygenase fogE is then responsible for the hydroxylation at C-3 of the benzene ring. The fogE products are substrates of the prenyltransferase fogH and the prenylated benzyl alcohols are subsequently oxidized by the fogF to produce the final aryl aldehydes flavoglaucin and congeners. The short-chain dehydrogenase fogG does not seem to be involved in the biosynthesis of the prenylated salicylaldehyde derivatives. The polypeptide is Short-chain dehydrogenase fogB (Aspergillus ruber (strain CBS 135680)).